We begin with the raw amino-acid sequence, 104 residues long: Large ribosomal subunit protein uL24 (104 aa).

Belongs to the universal ribosomal protein uL24 family. Part of the 50S ribosomal subunit.

In terms of biological role, one of two assembly initiator proteins, it binds directly to the 5'-end of the 23S rRNA, where it nucleates assembly of the 50S subunit. Its function is as follows. One of the proteins that surrounds the polypeptide exit tunnel on the outside of the subunit. This is Large ribosomal subunit protein uL24 from Corynebacterium diphtheriae (strain ATCC 700971 / NCTC 13129 / Biotype gravis).